A 585-amino-acid chain; its full sequence is MSVISTLRDRATTTPSDEAFVFMDYDTKTGDQIDRMTWSQLYSRVTAVSAYLISYGRHADRRRTAAISAPQGLDYVAGFLGALCAGWTPVPLPEPLGSLRDKRTGLAVLDCAADVVLTTSQAETRVRATIATHGASVTTPVIALDTLDEPSGDNCDLDSQLSDWSSYLQYTSGSTANPRGVVLSMRNVTENVDQIIRNYFRHEGGAPRLPSSVVSWLPLYHDMGLMVGLFIPLFVGCPVILTSPEAFIRKPARWMQLLAKHQAPFSAAPNFAFDLAVAKTSEEDMAGLDLGHVNTIINGAEQVQPNTITKFLRRFRPYNLMPAAVKPSYGMAEAVVYLATTKAGSPPTSTEFDADSLARGHAELSTFETERATRLIRYHSDDKEPLLRIVDPDSNIELGPGRIGEIWIHGKNVSTGYHNADDALNRDKFQASIREASAGTPRSPWLRTGDLGFIVGDEFYIVGRMKDLIIQDGVNHYPDDIETTVKEFTGGRVAAFSVSDDGVEHLVIAAEVRTEHGPDKVTIMDFSTIKRLVVSALSKLHGLHVTDFLLVPPGALPKTTSGKISRAACAKQYGANKLQRVATFP.

This sequence belongs to the ATP-dependent AMP-binding enzyme family.

It functions in the pathway lipid metabolism; fatty acid biosynthesis. Functionally, catalyzes the activation of long-chain fatty acids as acyl-adenylates (acyl-AMP), which are then transferred to a multifunctional polyketide synthase (PKS) for further chain extension. This chain is Probable long-chain-fatty-acid--AMP ligase FadD30 (fadD30), found in Mycobacterium tuberculosis (strain CDC 1551 / Oshkosh).